A 347-amino-acid chain; its full sequence is D-alanine--D-alanine ligase (347 aa).

An ATP-grasp domain is found at 131–333; the sequence is KRVLESAGIA…YPELIERLVD (203 aa). 161–216 contributes to the ATP binding site; sequence EEKLAYPVFTKPSNMGSSVGISKSENQEELRPALELAFRYDSRVLVEQGVNAREIE. 3 residues coordinate Mg(2+): Asp-287, Glu-300, and Asn-302.

This sequence belongs to the D-alanine--D-alanine ligase family. The cofactor is Mg(2+). Requires Mn(2+) as cofactor.

The protein resides in the cytoplasm. The enzyme catalyses 2 D-alanine + ATP = D-alanyl-D-alanine + ADP + phosphate + H(+). The protein operates within cell wall biogenesis; peptidoglycan biosynthesis. In terms of biological role, cell wall formation. This chain is D-alanine--D-alanine ligase, found in Streptococcus pneumoniae (strain Taiwan19F-14).